The following is a 375-amino-acid chain: uncharacterized protein (375 aa).

It belongs to the mimivirus L17x/L18x family.

This is an uncharacterized protein from Acanthamoeba polyphaga mimivirus (APMV).